Reading from the N-terminus, the 267-residue chain is Diphthine synthase (267 aa).

Residues L9, D87, I90, 115–116 (SI), L166, L205, and H230 contribute to the S-adenosyl-L-methionine site.

This sequence belongs to the diphthine synthase family. As to quaternary structure, homodimer.

The enzyme catalyses 2-[(3S)-amino-3-carboxypropyl]-L-histidyl-[translation elongation factor 2] + 3 S-adenosyl-L-methionine = diphthine-[translation elongation factor 2] + 3 S-adenosyl-L-homocysteine + 3 H(+). The protein operates within protein modification; peptidyl-diphthamide biosynthesis. Functionally, S-adenosyl-L-methionine-dependent methyltransferase that catalyzes the trimethylation of the amino group of the modified target histidine residue in translation elongation factor 2 (EF-2), to form an intermediate called diphthine. The three successive methylation reactions represent the second step of diphthamide biosynthesis. The protein is Diphthine synthase of Staphylothermus marinus (strain ATCC 43588 / DSM 3639 / JCM 9404 / F1).